Reading from the N-terminus, the 401-residue chain is Thermophilic serine proteinase (401 aa).

The N-terminal stretch at 1 to 24 is a signal peptide; it reads MKFKAIVSLSLAVSMSLFPFLVEA. A propeptide spanning residues 25–121 is cleaved from the precursor; the sequence is ASNDGVESPK…AEPNYLFNAA (97 aa). Aspartate 126 is a Ca(2+) binding site. Residues 133–399 enclose the Peptidase S8 domain; sequence QYGPQNTYTD…YGRINSYNAV (267 aa). Residue aspartate 160 is the Charge relay system of the active site. Positions 168, 169, 171, 179, 184, and 186 each coordinate Ca(2+). Residue histidine 193 is the Charge relay system of the active site. Glutamate 204, asparagine 207, threonine 209, and isoleucine 211 together coordinate Ca(2+). A disulfide bridge links cysteine 258 with cysteine 260. Positions 297, 300, and 323 each coordinate Na(+). The active-site Charge relay system is serine 347.

The protein belongs to the peptidase S8 family. Requires Ca(2+) as cofactor. Na(+) serves as cofactor.

It localises to the secreted. In Bacillus sp. (strain AK1), this protein is Thermophilic serine proteinase.